Reading from the N-terminus, the 156-residue chain is Phosphopantetheine adenylyltransferase (156 aa).

Substrate is bound at residue T10. ATP is bound by residues 10–11 and H18; that span reads TF. Substrate is bound by residues K42, L74, and R88. Residues 89–91, E99, and 124–130 each bind ATP; these read GLR and NAFISSS.

It belongs to the bacterial CoaD family. In terms of assembly, homohexamer. The cofactor is Mg(2+).

The protein resides in the cytoplasm. It carries out the reaction (R)-4'-phosphopantetheine + ATP + H(+) = 3'-dephospho-CoA + diphosphate. Its pathway is cofactor biosynthesis; coenzyme A biosynthesis; CoA from (R)-pantothenate: step 4/5. Functionally, reversibly transfers an adenylyl group from ATP to 4'-phosphopantetheine, yielding dephospho-CoA (dPCoA) and pyrophosphate. This Campylobacter curvus (strain 525.92) protein is Phosphopantetheine adenylyltransferase.